The following is a 517-amino-acid chain: Bifunctional purine biosynthesis protein PurH (517 aa).

The MGS-like domain occupies 1–145; the sequence is MSPLALVSVS…KNHADVAVLV (145 aa).

It belongs to the PurH family.

It catalyses the reaction (6R)-10-formyltetrahydrofolate + 5-amino-1-(5-phospho-beta-D-ribosyl)imidazole-4-carboxamide = 5-formamido-1-(5-phospho-D-ribosyl)imidazole-4-carboxamide + (6S)-5,6,7,8-tetrahydrofolate. The catalysed reaction is IMP + H2O = 5-formamido-1-(5-phospho-D-ribosyl)imidazole-4-carboxamide. It participates in purine metabolism; IMP biosynthesis via de novo pathway; 5-formamido-1-(5-phospho-D-ribosyl)imidazole-4-carboxamide from 5-amino-1-(5-phospho-D-ribosyl)imidazole-4-carboxamide (10-formyl THF route): step 1/1. Its pathway is purine metabolism; IMP biosynthesis via de novo pathway; IMP from 5-formamido-1-(5-phospho-D-ribosyl)imidazole-4-carboxamide: step 1/1. The sequence is that of Bifunctional purine biosynthesis protein PurH from Prochlorococcus marinus (strain MIT 9515).